Consider the following 100-residue polypeptide: Large ribosomal subunit protein bL27 (100 aa).

Positions 1–9 are excised as a propeptide; it reads MLVMNLQLF.

Belongs to the bacterial ribosomal protein bL27 family. In terms of processing, the N-terminus is cleaved by ribosomal processing cysteine protease Prp.

In Clostridium botulinum (strain 657 / Type Ba4), this protein is Large ribosomal subunit protein bL27.